Consider the following 65-residue polypeptide: Putative beta-neurotoxin RjAa8 (65 aa).

The LCN-type CS-alpha/beta domain maps to 1 to 64; it reads KEGYPMGRDG…VWDSSTNKCG (64 aa). Intrachain disulfides connect Cys11-Cys63, Cys15-Cys37, Cys22-Cys44, and Cys26-Cys46.

It belongs to the long (4 C-C) scorpion toxin superfamily. Sodium channel inhibitor family. Beta subfamily. As to expression, expressed by the venom gland.

The protein resides in the secreted. Its function is as follows. Beta toxins bind voltage-independently at site-4 of sodium channels (Nav) and shift the voltage of activation toward more negative potentials thereby affecting sodium channel activation and promoting spontaneous and repetitive firing. The sequence is that of Putative beta-neurotoxin RjAa8 from Rhopalurus junceus (Caribbean blue scorpion).